The chain runs to 239 residues: MEIDREDGRTPNQLRPLACSRNILHRPHGSASWSQGDTKVLAAVYGPKAGTKKNENAEKACFEVIWKPKSGQIGKVEKEYEMILKRTIQSICVLTVNPNTTTSVIIQVVHDDGSLLPCAINAACAALVDAGIPMKHLAVAICCCLAENGYLVLDPNKLEEKKMTAFAYLVFPNTTLSVLPEGSSVAEGEPVEHGIITSITHGVMSVDDYFLCVENGRAATASLSAFFRKNFQQSSSKAG.

An N-acetylmethionine modification is found at M1.

This sequence belongs to the RNase PH family. In terms of assembly, probable component of the RNA exosome complex.

It is found in the nucleus. The protein localises to the nucleolus. Its function is as follows. Probable component of the exosome 3'-&gt;5' exoribonuclease complex, a complex that degrades inherently unstable mRNAs containing AU-rich elements (AREs) within their 3'-untranslated regions. This Arabidopsis thaliana (Mouse-ear cress) protein is Exosome complex exonuclease RRP46 homolog.